Here is a 253-residue protein sequence, read N- to C-terminus: 3-deoxy-manno-octulosonate cytidylyltransferase (253 aa).

The protein belongs to the KdsB family.

Its subcellular location is the cytoplasm. It catalyses the reaction 3-deoxy-alpha-D-manno-oct-2-ulosonate + CTP = CMP-3-deoxy-beta-D-manno-octulosonate + diphosphate. The protein operates within nucleotide-sugar biosynthesis; CMP-3-deoxy-D-manno-octulosonate biosynthesis; CMP-3-deoxy-D-manno-octulosonate from 3-deoxy-D-manno-octulosonate and CTP: step 1/1. It participates in bacterial outer membrane biogenesis; lipopolysaccharide biosynthesis. Activates KDO (a required 8-carbon sugar) for incorporation into bacterial lipopolysaccharide in Gram-negative bacteria. In Neisseria meningitidis serogroup B (strain ATCC BAA-335 / MC58), this protein is 3-deoxy-manno-octulosonate cytidylyltransferase.